Reading from the N-terminus, the 234-residue chain is Multicopy suppressor of SEC21 protein 27 (234 aa).

Topologically, residues 1 to 47 (MQTPLESTDVKLDTLNEPSAHLIEKNVALPKDIFRSYLSYWIYEIAR) are cytoplasmic. Residue threonine 3 is modified to Phosphothreonine. The chain crosses the membrane as a helical span at residues 48 to 68 (YTPVMILSLVIGVLVLLIIFF). At 69–72 (NDNE) the chain is on the extracellular side. The chain crosses the membrane as a helical span at residues 73–93 (ACVFNSAYYAYLSLVVLLIIL). The Cytoplasmic segment spans residues 94–234 (GDGNPKLVSR…NIDALLKKTE (141 aa)). The interval 231-234 (KKTE) is COPI binding.

This sequence belongs to the DUP/COS family. As to quaternary structure, interacts with MST28. Binds to coatomer proteins of COPI and SEC23/SEC24 of COPII coated vesicles.

The protein resides in the endoplasmic reticulum. Its subcellular location is the golgi apparatus. It localises to the cytoplasmic vesicle. It is found in the COPI-coated vesicle membrane. The protein localises to the COPII-coated vesicle membrane. In terms of biological role, involved in protein trafficking vesicle formation, probably by stabilizing of coatomer at the Golgi membrane and thus allowing the efficient formation of COPI coated vesicles. The chain is Multicopy suppressor of SEC21 protein 27 (MST27) from Saccharomyces cerevisiae (strain ATCC 204508 / S288c) (Baker's yeast).